The primary structure comprises 620 residues: 1-deoxy-D-xylulose-5-phosphate synthase (620 aa).

Thiamine diphosphate-binding positions include histidine 80 and 121–123 (GHS). Aspartate 152 contacts Mg(2+). Residues 153–154 (GA), asparagine 181, tyrosine 288, and glutamate 370 contribute to the thiamine diphosphate site. Asparagine 181 contacts Mg(2+).

The protein belongs to the transketolase family. DXPS subfamily. As to quaternary structure, homodimer. The cofactor is Mg(2+). Requires thiamine diphosphate as cofactor.

The catalysed reaction is D-glyceraldehyde 3-phosphate + pyruvate + H(+) = 1-deoxy-D-xylulose 5-phosphate + CO2. The protein operates within metabolic intermediate biosynthesis; 1-deoxy-D-xylulose 5-phosphate biosynthesis; 1-deoxy-D-xylulose 5-phosphate from D-glyceraldehyde 3-phosphate and pyruvate: step 1/1. Functionally, catalyzes the acyloin condensation reaction between C atoms 2 and 3 of pyruvate and glyceraldehyde 3-phosphate to yield 1-deoxy-D-xylulose-5-phosphate (DXP). This Escherichia coli O7:K1 (strain IAI39 / ExPEC) protein is 1-deoxy-D-xylulose-5-phosphate synthase.